The primary structure comprises 94 residues: Co-chaperonin GroES (94 aa).

Belongs to the GroES chaperonin family. Heptamer of 7 subunits arranged in a ring. Interacts with the chaperonin GroEL.

It is found in the cytoplasm. Its function is as follows. Together with the chaperonin GroEL, plays an essential role in assisting protein folding. The GroEL-GroES system forms a nano-cage that allows encapsulation of the non-native substrate proteins and provides a physical environment optimized to promote and accelerate protein folding. GroES binds to the apical surface of the GroEL ring, thereby capping the opening of the GroEL channel. In Orientia tsutsugamushi (Rickettsia tsutsugamushi), this protein is Co-chaperonin GroES.